The following is a 1221-amino-acid chain: DNA-directed RNA polymerase subunit beta' (1221 aa).

The Zn(2+) site is built by C60, C62, C75, and C78. The Mg(2+) site is built by D449, D451, and D453. C821, C896, C903, and C906 together coordinate Zn(2+).

This sequence belongs to the RNA polymerase beta' chain family. The RNAP catalytic core consists of 2 alpha, 1 beta, 1 beta' and 1 omega subunit. When a sigma factor is associated with the core the holoenzyme is formed, which can initiate transcription. Mg(2+) is required as a cofactor. Zn(2+) serves as cofactor.

It carries out the reaction RNA(n) + a ribonucleoside 5'-triphosphate = RNA(n+1) + diphosphate. In terms of biological role, DNA-dependent RNA polymerase catalyzes the transcription of DNA into RNA using the four ribonucleoside triphosphates as substrates. The polypeptide is DNA-directed RNA polymerase subunit beta' (Lactobacillus delbrueckii subsp. bulgaricus (strain ATCC 11842 / DSM 20081 / BCRC 10696 / JCM 1002 / NBRC 13953 / NCIMB 11778 / NCTC 12712 / WDCM 00102 / Lb 14)).